Here is a 333-residue protein sequence, read N- to C-terminus: MSAPIVHGGGITEAAARYGGRPEDWLDLSTGINPCPVALPAVPERAWHRLPDRQTVDDARSAAADYYRTNGVLPLPVPGTQSVIQLLPRLAPANRHVAIFGPTYGEYARVLEAAGFAVDRVADADALTAEHGLVIVVNPNNPTGRALAPAELLAIAARQKASGGLLLVDEAFGDLEPQLSVAGHASGQGNLIVFRSFGKFFGLAGLRLGFVVATEPVLASFADWLGPWAVSGPALTISKALMQGDTKAIAAGILERRAGLDAALDGAGLNRIGGTGLFVLVEHPRAALLQERLCEAHILTRKFDYAPTWLRVGLAPDAAGDRRLADALARMEL.

The residue at position 199 (Lys-199) is an N6-(pyridoxal phosphate)lysine.

The protein belongs to the class-I pyridoxal-phosphate-dependent aminotransferase family. In terms of assembly, homodimer. Requires pyridoxal 5'-phosphate as cofactor.

It localises to the cytoplasm. The catalysed reaction is O-phospho-L-threonine + H(+) = (R)-1-aminopropan-2-yl phosphate + CO2. The protein operates within cofactor biosynthesis; adenosylcobalamin biosynthesis. Decarboxylates L-threonine-O-3-phosphate to yield (R)-1-amino-2-propanol O-2-phosphate, the precursor for the linkage between the nucleotide loop and the corrin ring in cobalamin. The protein is Threonine-phosphate decarboxylase (cobC) of Sinorhizobium sp.